The following is a 37-amino-acid chain: Potassium channel toxin alpha-KTx 1.3 (37 aa).

Q1 is subject to Pyrrolidone carboxylic acid. 3 disulfides stabilise this stretch: C7/C28, C13/C33, and C17/C35. The tract at residues 26–33 (GKCMGKKC) is interaction with Ca(2+)-activated K(+) channels.

It belongs to the short scorpion toxin superfamily. Potassium channel inhibitor family. Alpha-KTx 01 subfamily. In terms of tissue distribution, expressed by the venom gland.

It is found in the secreted. Its function is as follows. Blocks selectively the high conductance calcium-activated (maxi-K) potassium channels (KCa1.1/KCNMA1). The protein is Potassium channel toxin alpha-KTx 1.3 of Hottentotta tamulus (Eastern Indian scorpion).